The following is a 48-amino-acid chain: Hemoglobin subunit beta-B (48 aa).

Residues 2-48 enclose the Globin domain; it reads EWTDAERGAILSLWGKIDPDELGPALLARXXLVYXXTQRYFASFGDL.

This sequence belongs to the globin family. As to quaternary structure, heterotetramer of two alpha chains and two beta chains. Red blood cells.

Involved in oxygen transport from gills to the various peripheral tissues. This Catostomus clarkii (Desert sucker) protein is Hemoglobin subunit beta-B.